The sequence spans 350 residues: tRNA U34 carboxymethyltransferase (350 aa).

Carboxy-S-adenosyl-L-methionine is bound by residues Lys-101, Trp-125, Lys-130, Gly-150, 172-174, 208-209, Met-224, Tyr-228, and Arg-343; these read DPS and LE.

Belongs to the class I-like SAM-binding methyltransferase superfamily. CmoB family. As to quaternary structure, homotetramer.

The enzyme catalyses carboxy-S-adenosyl-L-methionine + 5-hydroxyuridine(34) in tRNA = 5-carboxymethoxyuridine(34) in tRNA + S-adenosyl-L-homocysteine + H(+). Its function is as follows. Catalyzes carboxymethyl transfer from carboxy-S-adenosyl-L-methionine (Cx-SAM) to 5-hydroxyuridine (ho5U) to form 5-carboxymethoxyuridine (cmo5U) at position 34 in tRNAs. This Psychrobacter arcticus (strain DSM 17307 / VKM B-2377 / 273-4) protein is tRNA U34 carboxymethyltransferase.